We begin with the raw amino-acid sequence, 142 residues long: uncharacterized protein (142 aa).

This is an uncharacterized protein from Gallid herpesvirus 2 (strain GA) (GaHV-2).